A 499-amino-acid polypeptide reads, in one-letter code: Aspartyl/glutamyl-tRNA(Asn/Gln) amidotransferase subunit B (499 aa).

Belongs to the GatB/GatE family. GatB subfamily. In terms of assembly, heterotrimer of A, B and C subunits.

It carries out the reaction L-glutamyl-tRNA(Gln) + L-glutamine + ATP + H2O = L-glutaminyl-tRNA(Gln) + L-glutamate + ADP + phosphate + H(+). The enzyme catalyses L-aspartyl-tRNA(Asn) + L-glutamine + ATP + H2O = L-asparaginyl-tRNA(Asn) + L-glutamate + ADP + phosphate + 2 H(+). Its function is as follows. Allows the formation of correctly charged Asn-tRNA(Asn) or Gln-tRNA(Gln) through the transamidation of misacylated Asp-tRNA(Asn) or Glu-tRNA(Gln) in organisms which lack either or both of asparaginyl-tRNA or glutaminyl-tRNA synthetases. The reaction takes place in the presence of glutamine and ATP through an activated phospho-Asp-tRNA(Asn) or phospho-Glu-tRNA(Gln). The protein is Aspartyl/glutamyl-tRNA(Asn/Gln) amidotransferase subunit B of Bartonella tribocorum (strain CIP 105476 / IBS 506).